The following is a 61-amino-acid chain: MGWLADYWWVVLLVLAGMLIGGVKALRRVDATSYLKNRPELPPHRDNNAQWDEEDDWPKKP.

Residues 3-23 (WLADYWWVVLLVLAGMLIGGV) traverse the membrane as a helical segment. Over residues 37–47 (NRPELPPHRDN) the composition is skewed to basic and acidic residues. The segment at 37-61 (NRPELPPHRDNNAQWDEEDDWPKKP) is disordered. Acidic residues predominate over residues 51 to 61 (WDEEDDWPKKP).

This sequence belongs to the UPF0370 family.

The protein resides in the cell membrane. The sequence is that of UPF0370 protein SG1720 from Sodalis glossinidius (strain morsitans).